We begin with the raw amino-acid sequence, 160 residues long: Regulatory protein RecX (160 aa).

This sequence belongs to the RecX family.

It localises to the cytoplasm. Functionally, modulates RecA activity. In Xanthomonas oryzae pv. oryzae (strain MAFF 311018), this protein is Regulatory protein RecX.